Reading from the N-terminus, the 160-residue chain is Cytochrome b6-f complex subunit 4 (160 aa).

A run of 3 helical transmembrane segments spans residues L36–V56, L95–E115, and I128–C148.

This sequence belongs to the cytochrome b family. PetD subfamily. In terms of assembly, the 4 large subunits of the cytochrome b6-f complex are cytochrome b6, subunit IV (17 kDa polypeptide, PetD), cytochrome f and the Rieske protein, while the 4 small subunits are PetG, PetL, PetM and PetN. The complex functions as a dimer.

The protein localises to the cellular thylakoid membrane. In terms of biological role, component of the cytochrome b6-f complex, which mediates electron transfer between photosystem II (PSII) and photosystem I (PSI), cyclic electron flow around PSI, and state transitions. The sequence is that of Cytochrome b6-f complex subunit 4 from Prochlorococcus marinus (strain MIT 9312).